Reading from the N-terminus, the 309-residue chain is Pantoate--beta-alanine ligase (309 aa).

It belongs to the pantothenate synthetase family.

It is found in the cytoplasm. The protein localises to the nucleus. It carries out the reaction (R)-pantoate + beta-alanine + ATP = (R)-pantothenate + AMP + diphosphate + H(+). It functions in the pathway cofactor biosynthesis; (R)-pantothenate biosynthesis; (R)-pantothenate from (R)-pantoate and beta-alanine: step 1/1. Its function is as follows. Required for pantothenic acid biosynthesis. The chain is Pantoate--beta-alanine ligase (PAN6) from Saccharomyces cerevisiae (strain ATCC 204508 / S288c) (Baker's yeast).